We begin with the raw amino-acid sequence, 1873 residues long: Ankyrin repeat domain-containing protein 31 (1873 aa).

2 disordered regions span residues 1–27 (MEEG…SDLE) and 361–380 (EPLS…DQET). A compositionally biased stretch (polar residues) spans 361–379 (EPLSNKRNSNSVTNSSDQE). 3 ANK repeats span residues 488–517 (FGEN…NVNQ), 521–550 (AGWT…DVNI), and 554–583 (YQIT…DPLF). The tract at residues 707 to 740 (TGLRKGNLHNVKDPNTNVPKGIGRRKTQHKRTQV) is disordered. Residues 728–737 (IGRRKTQHKR) show a composition bias toward basic residues. ANK repeat units follow at residues 1154–1183 (RGES…DVNL), 1187–1216 (AGWT…KVNC), and 1220–1249 (DGIL…NPNQ). Disordered stretches follow at residues 1242–1263 (QNGA…EADD), 1449–1482 (RSEI…SGSM), 1512–1549 (FSGN…PSQP), and 1606–1634 (CDQD…ASES). The span at 1250–1263 (KDQKQKSALDEADD) shows a compositional bias: basic and acidic residues. 2 stretches are compositionally biased toward polar residues: residues 1460–1482 (ELTS…SGSM) and 1515–1525 (NDMNSKQNGSD). A compositionally biased stretch (basic and acidic residues) spans 1535-1544 (RHSDGTEKNK). Over residues 1621–1632 (KTSSQQSPTGAS) the composition is skewed to polar residues. In terms of domain architecture, RAMA spans 1683–1778 (KKALNYSTAP…TYLGKELLRY (96 aa)).

In terms of assembly, interacts with REC114; the interaction is direct. Interacts with IHO1.

It is found in the nucleus. The protein resides in the chromosome. Its function is as follows. Required for DNA double-strand breaks (DSBs) formation during meiotic recombination. Regulates the spatial and temporal patterns of pre-DSB recombinosome assembly and recombination activity by acting as a scaffold that anchors REC114 and other factors to specific genomic locations, thereby regulating DSB formation. Plays a key role in recombination in the pseudoautosomal regions of sex chromosomes. The protein is Ankyrin repeat domain-containing protein 31 of Homo sapiens (Human).